We begin with the raw amino-acid sequence, 397 residues long: Growth-regulating factor 1 (397 aa).

Residues 18-53 form the QLQ domain; that stretch reads PFTASQWQELEHQALIYKYMASGTPIPSDLILPLRR. Short sequence motifs (bipartite nuclear localization signal) lie at residues 86-105 and 123-130; these read RKAE…KKWR and RGKNRSRK. Positions 90 to 134 constitute a WRC domain; that stretch reads DPEPGRCRRTDGKKWRCSKEAYPDSKYCEKHMHRGKNRSRKPVEM. The tract at residues 117–176 is disordered; sequence CEKHMHRGKNRSRKPVEMSLATPPPPSSSATSAASNTSAGVAPTTTTTSSPAPSYSRPAP. Over residues 120–129 the composition is skewed to basic residues; that stretch reads HMHRGKNRSR. Positions 144–174 are enriched in low complexity; it reads SSATSAASNTSAGVAPTTTTTSSPAPSYSRP.

The protein belongs to the GRF family.

Its subcellular location is the nucleus. In terms of biological role, transcription activator that plays a regulatory role in gibberellin-induced stem elongation. This Oryza sativa subsp. japonica (Rice) protein is Growth-regulating factor 1 (GRF1).